Reading from the N-terminus, the 234-residue chain is Glycerol uptake facilitator protein (234 aa).

6 helical membrane passes run 9–29, 37–57, 61–81, 83–103, 135–155, and 159–179; these read FLGT…VVLP, GWIV…FVSG, PAHL…LPWA, VLPY…LVWL, LISE…LGLY, and AGIG…SLGG. Positions 65–67 match the NPA 1 motif; the sequence is NPA. An NPA 2 motif is present at residues 186-188; sequence NPA. Residues 214–234 traverse the membrane as a helical segment; that stretch reads WIPVVGPVIGAALAVLVFSLF.

The protein belongs to the MIP/aquaporin (TC 1.A.8) family.

It is found in the cell membrane. It catalyses the reaction glycerol(in) = glycerol(out). Mediates glycerol diffusion across the cytoplasmic membrane via a pore-type mechanism. This Streptococcus pneumoniae (strain ATCC BAA-255 / R6) protein is Glycerol uptake facilitator protein (glpF).